We begin with the raw amino-acid sequence, 470 residues long: UDP-N-acetylmuramoylalanine--D-glutamate ligase (470 aa).

Residue 120 to 126 participates in ATP binding; the sequence is GSNGKTT.

This sequence belongs to the MurCDEF family.

It is found in the cytoplasm. The enzyme catalyses UDP-N-acetyl-alpha-D-muramoyl-L-alanine + D-glutamate + ATP = UDP-N-acetyl-alpha-D-muramoyl-L-alanyl-D-glutamate + ADP + phosphate + H(+). Its pathway is cell wall biogenesis; peptidoglycan biosynthesis. Its function is as follows. Cell wall formation. Catalyzes the addition of glutamate to the nucleotide precursor UDP-N-acetylmuramoyl-L-alanine (UMA). The protein is UDP-N-acetylmuramoylalanine--D-glutamate ligase of Nitrosomonas eutropha (strain DSM 101675 / C91 / Nm57).